A 686-amino-acid polypeptide reads, in one-letter code: Methionine--tRNA ligase (686 aa).

The 'HIGH' region signature appears at Pro-15–His-25. 4 residues coordinate Zn(2+): Cys-146, Cys-149, Cys-159, and Cys-162. Residues Lys-332–Ser-336 carry the 'KMSKS' region motif. Lys-335 is an ATP binding site. The disordered stretch occupies residues Ala-550 to Glu-571. The region spanning Ala-585–Met-686 is the tRNA-binding domain.

Belongs to the class-I aminoacyl-tRNA synthetase family. MetG type 1 subfamily. Homodimer. Zn(2+) serves as cofactor.

The protein resides in the cytoplasm. It carries out the reaction tRNA(Met) + L-methionine + ATP = L-methionyl-tRNA(Met) + AMP + diphosphate. In terms of biological role, is required not only for elongation of protein synthesis but also for the initiation of all mRNA translation through initiator tRNA(fMet) aminoacylation. The polypeptide is Methionine--tRNA ligase (Vibrio atlanticus (strain LGP32) (Vibrio splendidus (strain Mel32))).